We begin with the raw amino-acid sequence, 170 residues long: Acetolactate synthase small subunit (170 aa).

Residues 9–83 form the ACT domain; the sequence is TLSVLVEDKP…NVIKIVEQEE (75 aa). Residue Lys-46 forms an Isoglutamyl lysine isopeptide (Lys-Gln) (interchain with Q-Cter in protein Pup) linkage.

Belongs to the acetolactate synthase small subunit family. In terms of assembly, dimer of large and small chains.

The enzyme catalyses 2 pyruvate + H(+) = (2S)-2-acetolactate + CO2. It functions in the pathway amino-acid biosynthesis; L-isoleucine biosynthesis; L-isoleucine from 2-oxobutanoate: step 1/4. Its pathway is amino-acid biosynthesis; L-valine biosynthesis; L-valine from pyruvate: step 1/4. This is Acetolactate synthase small subunit (ilvH) from Mycolicibacterium smegmatis (strain ATCC 700084 / mc(2)155) (Mycobacterium smegmatis).